The primary structure comprises 199 residues: Imidazoleglycerol-phosphate dehydratase (199 aa).

Belongs to the imidazoleglycerol-phosphate dehydratase family.

The protein localises to the cytoplasm. It catalyses the reaction D-erythro-1-(imidazol-4-yl)glycerol 3-phosphate = 3-(imidazol-4-yl)-2-oxopropyl phosphate + H2O. Its pathway is amino-acid biosynthesis; L-histidine biosynthesis; L-histidine from 5-phospho-alpha-D-ribose 1-diphosphate: step 6/9. The polypeptide is Imidazoleglycerol-phosphate dehydratase (Desulfotalea psychrophila (strain LSv54 / DSM 12343)).